Here is a 573-residue protein sequence, read N- to C-terminus: Potassium-transporting ATPase potassium-binding subunit (573 aa).

10 helical membrane-spanning segments follow: residues 6–26 (ILFALFIVTIALITKPLGSYI), 66–86 (FFSLVSFSVMAFIFVLVILLL), 135–155 (ALAVQNFVSAAVGLCVAIALI), 177–197 (VFWILLPISIVIAIVYIFQGV), 257–277 (IQMVSIFAIAAALTYTFGKWV), 283–303 (GWLIFGVMLVLFIISLVVMTI), 382–402 (IFGGVGAGFYGFFMFLMLAVF), 428–448 (MFALLIFPCCVLVFTGLAAVI), 493–513 (ITIALSMLIGRFGVIFAVIML), and 537–557 (FIFAILVFFTILLIGGLTIFP).

Belongs to the KdpA family. In terms of assembly, the system is composed of three essential subunits: KdpA, KdpB and KdpC.

The protein localises to the cell inner membrane. Functionally, part of the high-affinity ATP-driven potassium transport (or Kdp) system, which catalyzes the hydrolysis of ATP coupled with the electrogenic transport of potassium into the cytoplasm. This subunit binds the periplasmic potassium ions and delivers the ions to the membrane domain of KdpB through an intramembrane tunnel. This chain is Potassium-transporting ATPase potassium-binding subunit, found in Francisella tularensis subsp. holarctica (strain FTNF002-00 / FTA).